The following is a 121-amino-acid chain: Small ribosomal subunit protein uS11 (121 aa).

Belongs to the universal ribosomal protein uS11 family. In terms of assembly, part of the 30S ribosomal subunit. Interacts with proteins S7 and S18. Binds to IF-3.

Its function is as follows. Located on the platform of the 30S subunit, it bridges several disparate RNA helices of the 16S rRNA. Forms part of the Shine-Dalgarno cleft in the 70S ribosome. The sequence is that of Small ribosomal subunit protein uS11 from Ureaplasma parvum serovar 3 (strain ATCC 27815 / 27 / NCTC 11736).